Reading from the N-terminus, the 741-residue chain is Double-stranded RNA-specific editase 1 (741 aa).

The interval 1–79 is disordered; the sequence is MDIEDEENMS…RRKTPGPVLP (79 aa). Serine 26 carries the post-translational modification Phosphoserine. Residues 33 to 49 show a composition bias toward gly residues; sequence PGPGEGSQLSNGGGGGP. Positions 63 to 73 are enriched in basic residues; the sequence is SKYRLKKRRKT. Positions 78–144 constitute a DRBM 1 domain; it reads LPKNALMQLN…AEKALRSFVQ (67 aa). 2 interaction with substrate RNA regions span residues 83-88 and 104-105; these read LMQLNE and VH. Serine 149 is modified (phosphoserine). In terms of domain architecture, DRBM 2 spans 231-298; that stretch reads PSGKNPVMIL…AQSALAAIFN (68 aa). 2 interaction with substrate RNA regions span residues 237-242 and histidine 259; that span reads VMILNE. Residues 370 to 737 enclose the A to I editase domain; that stretch reads SVSTGTKCIN…VEKPTEQDQF (368 aa). A Zn(2+)-binding site is contributed by histidine 394. The Proton donor role is filled by glutamate 396. 1D-myo-inositol hexakisphosphate is bound by residues arginine 400 and arginine 401. Residue cysteine 451 participates in Zn(2+) binding. Residues 486-518 are disordered; sequence RPPGLLSDPSTSTFQGAGTTEPADRHPNRKARG. Residues 493-503 show a composition bias toward polar residues; it reads DPSTSTFQGAG. A Zn(2+)-binding site is contributed by cysteine 556. 6 residues coordinate 1D-myo-inositol hexakisphosphate: lysine 559, arginine 562, lysine 669, lysine 702, lysine 712, and lysine 730.

In terms of assembly, homodimer. Homodimerization is essential for its catalytic activity. Can form heterodimers with isoform 5 of ADAR/ADAR1. Requires 1D-myo-inositol hexakisphosphate as cofactor. In terms of tissue distribution, highly expressed in brain and heart and at lower levels in placenta. Fair expression in lung, liver and kidney. Detected in brain, heart, kidney, lung and liver (at protein level). Highly expressed in hippocampus and colon. Expressed in pediatric astrocytomas and the protein has a decreased RNA-editing activity. The decrease in RNA editing correlates with the grade of malignancy of the tumors, with the high grade tumors showing lower editing is seen.

It is found in the nucleus. It localises to the nucleolus. The enzyme catalyses adenosine in double-stranded RNA + H2O + H(+) = inosine in double-stranded RNA + NH4(+). Catalyzes the hydrolytic deamination of adenosine to inosine in double-stranded RNA (dsRNA) referred to as A-to-I RNA editing. This may affect gene expression and function in a number of ways that include mRNA translation by changing codons and hence the amino acid sequence of proteins; pre-mRNA splicing by altering splice site recognition sequences; RNA stability by changing sequences involved in nuclease recognition; genetic stability in the case of RNA virus genomes by changing sequences during viral RNA replication; and RNA structure-dependent activities such as microRNA production or targeting or protein-RNA interactions. Can edit both viral and cellular RNAs and can edit RNAs at multiple sites (hyper-editing) or at specific sites (site-specific editing). Its cellular RNA substrates include: bladder cancer-associated protein (BLCAP), neurotransmitter receptors for glutamate (GRIA2 and GRIK2) and serotonin (HTR2C), GABA receptor (GABRA3) and potassium voltage-gated channel (KCNA1). Site-specific RNA editing of transcripts encoding these proteins results in amino acid substitutions which consequently alter their functional activities. Edits GRIA2 at both the Q/R and R/G sites efficiently but converts the adenosine in hotspot1 much less efficiently. Can exert a proviral effect towards human immunodeficiency virus type 1 (HIV-1) and enhances its replication via both an editing-dependent and editing-independent mechanism. The former involves editing of adenosines in the 5'UTR while the latter occurs via suppression of EIF2AK2/PKR activation and function. Can inhibit cell proliferation and migration and can stimulate exocytosis. Functionally, has a lower catalytic activity than isoform 2. Its function is as follows. Has a higher catalytic activity than isoform 1. The polypeptide is Double-stranded RNA-specific editase 1 (Homo sapiens (Human)).